We begin with the raw amino-acid sequence, 111 residues long: Cytochrome c (111 aa).

An N-acetylserine modification is found at Ser-1. The heme c site is built by Cys-22, Cys-25, and His-26. An N6,N6,N6-trimethyllysine modification is found at Lys-80. Met-88 contributes to the heme c binding site.

The protein belongs to the cytochrome c family. Post-translationally, binds 1 heme c group covalently per subunit.

The protein resides in the mitochondrion intermembrane space. Electron carrier protein. The oxidized form of the cytochrome c heme group can accept an electron from the heme group of the cytochrome c1 subunit of cytochrome reductase. Cytochrome c then transfers this electron to the cytochrome oxidase complex, the final protein carrier in the mitochondrial electron-transport chain. This chain is Cytochrome c, found in Ulva intestinalis (Hollow green nori).